The following is a 274-amino-acid chain: Uridine-5'-phosphate dioxygenase (274 aa).

Residues H103, D105, and H246 each contribute to the Fe cation site.

The cofactor is Fe(2+).

The catalysed reaction is UMP + 2-oxoglutarate + O2 = uridine-5'-aldehyde + succinate + phosphate + CO2. It functions in the pathway antibiotic biosynthesis. Inhibited by several divalent cations, including Zn(2+). Dioxygenase involved in the biosynthesis of the lipopeptidyl nucleoside antibiotic A-90289. Catalyzes the dephosphorylation and oxidation of UMP to generate uridine-5'-aldehyde, the first intermediate in the biosynthesis of A-90289. The polypeptide is Uridine-5'-phosphate dioxygenase (Streptomyces sp).